Here is a 544-residue protein sequence, read N- to C-terminus: MPLFLILCLLQGSSFALPQKRPHPRWLWEGSLPSRTHLRAMGTLTPSSPLCWQEESSFAAPNALKGSRLVSGEPGGAVTIQCHYAPSSVNRHQRKYWCRLGPPRWICQTIVSTNHYTHHRYRDRVALTDFPQRGLFVVRLSQLSPDDIGCYLCGIGSENNMLFLSMNLTISAGPSSTLPTATPAAGELTMRSYGTASPVANRWTPGTTQTLGQGTAWDTVASTPGTSMTTASAEGRETPGATRLATPGTGSWAEGSVKAPAPIPESPASKAPAPIPESPASKSRSMSNTTEGVWEGTRSLVTNRAKASKDRREITTTKADRPREDTEGVRIALDAAKKVLGTIRPPALVSETLAWEIFPQATPVSKQQSLSSIGETTPAAGMWTLGTPAADVWILGTPTADVWTSMEAASGEGSSAGDLDAATGDRGPQVTLSQAPAVGPWRPPGKESFVKSTFPEDESSSRTLAPVSTMLALFMLMALVLLQRKLRRRRTSQEAERVTLIQMTHFLEVNPQPDQLPHVERKMLQDDSLPAGASLTAPERNPGP.

A signal peptide spans 1–16; the sequence is MPLFLILCLLQGSSFA. Residues 17–462 are Extracellular-facing; that stretch reads LPQKRPHPRW…TFPEDESSSR (446 aa). One can recognise an Ig-like V-type domain in the interval 61 to 169; sequence PNALKGSRLV…NMLFLSMNLT (109 aa). Residues 75–97 are mediates immunoglobulin Fc fragment-binding; sequence GGAVTIQCHYAPSSVNRHQRKYW. The cysteines at positions 82 and 153 are disulfide-linked. N167 carries N-linked (GlcNAc...) asparagine glycosylation. A disordered region spans residues 218 to 325; sequence DTVASTPGTS…TTKADRPRED (108 aa). 2 stretches are compositionally biased toward polar residues: residues 220–232 and 280–291; these read VASTPGTSMTTAS and ASKSRSMSNTTE. Over residues 307 to 325 the composition is skewed to basic and acidic residues; it reads ASKDRREITTTKADRPRED. Residues 463–483 traverse the membrane as a helical segment; it reads TLAPVSTMLALFMLMALVLLQ. The Cytoplasmic portion of the chain corresponds to 484–544; the sequence is RKLRRRRTSQ…LTAPERNPGP (61 aa). The disordered stretch occupies residues 511 to 544; that stretch reads PQPDQLPHVERKMLQDDSLPAGASLTAPERNPGP.

Interacts with IGHM; this interaction facilitates the endocytosis of IgM-coated microbes or IgM-antigen immune complexes. In terms of processing, N-glycosylated.

The protein localises to the cell membrane. Its function is as follows. Functions as a receptor for the Fc fragment of IgA and IgM. Binds IgA and IgM with high affinity and mediates their endocytosis. May function in the immune response to microbes mediated by IgA and IgM. This chain is High affinity immunoglobulin alpha and immunoglobulin mu Fc receptor (FCAMR), found in Pongo abelii (Sumatran orangutan).